The sequence spans 926 residues: DNA topoisomerase 3-alpha (926 aa).

The region spanning 10-154 (TVLNVAEKPS…NLFIRRAHFS (145 aa)) is the Toprim domain. Mg(2+) contacts are provided by Glu16, Asp123, and Asp125. Positions 172–604 (NQLFAEAVDA…CLQQMKACFL (433 aa)) constitute a Topo IA-type catalytic domain. The tract at residues 219-224 (SYGPCQ) is interaction with DNA. Residue Tyr342 is the O-(5'-phospho-DNA)-tyrosine intermediate of the active site. The C4-type zinc-finger motif lies at 642–670 (CNLCNESDMALRKNRDGNFMVGCMNYPQC). 2 disordered regions span residues 740–760 (SRSQ…QGSN) and 775–806 (HAST…TVSC). A compositionally biased stretch (polar residues) spans 750–760 (TAPSNNIQGSN). The CCHC-type 1 zinc finger occupies 767–782 (CIHCQQRGHASTNCPS). Zn(2+)-binding residues include Cys806, Cys809, Cys831, and Cys836. A GRF-type zinc finger spans residues 806–845 (CNTCGSQCVLRTANTEANRGRQFFSCPTQGCSFFAWEDSI). Positions 849–890 (SGNATTGSNSGGSGRRGSRGRGRGGRGGQSSGGRRGSGTSFV) are disordered. Residues 873 to 884 (GRGGQSSGGRRG) are compositionally biased toward gly residues. The segment at 901–917 (RCFSCGDPSHFANACPN) adopts a CCHC-type 2 zinc-finger fold.

The protein belongs to the type IA topoisomerase family. As to quaternary structure, component of the RMI complex, containing at least TOP3A and RMI1. The RMI complex interacts with RECQL4A. It depends on Mg(2+) as a cofactor.

It catalyses the reaction ATP-independent breakage of single-stranded DNA, followed by passage and rejoining.. In terms of biological role, releases the supercoiling and torsional tension of DNA introduced during the DNA replication and transcription by transiently cleaving and rejoining one strand of the DNA duplex. Introduces a single-strand break via transesterification at a target site in duplex DNA. The scissile phosphodiester is attacked by the catalytic tyrosine of the enzyme, resulting in the formation of a DNA-(5'-phosphotyrosyl)-enzyme intermediate and the expulsion of a 3'-OH DNA strand. The free DNA strand then undergoes passage around the unbroken strand thus removing DNA supercoils. Finally, in the religation step, the DNA 3'-OH attacks the covalent intermediate to expel the active-site tyrosine and restore the DNA phosphodiester backbone. Essential component of the RMI complex, a complex that plays an important role in the resolution step of homologous recombination, in a process called Holliday Junction dissolution, to limit DNA crossover formation in cells. Together with RMI1, is essential for the resolution of meiotic recombination intermediates, a step that prevents entanglement of the parental chromosomes. May have DNA decatenation activity. The polypeptide is DNA topoisomerase 3-alpha (TOP3A) (Arabidopsis thaliana (Mouse-ear cress)).